The following is a 24-amino-acid chain: Calcium-binding shell glycoprotein P50 (24 aa).

Residues 1–24 (KDALEHTGFAPKKDGEEHVEWNYN) form a disordered region.

Glycosylated. In terms of tissue distribution, nacreous and prismatic layers of the shell.

Calcium-binding. This chain is Calcium-binding shell glycoprotein P50, found in Unio pictorum (Painter's mussel).